A 512-amino-acid chain; its full sequence is Hyaluronidase PH-20 (512 aa).

A signal peptide spans 1-35; that stretch reads MGELQFKWLFWRSFAESGGTFQTVLIFLFIPYSLT. 2 cysteine pairs are disulfide-bonded: C60/C351 and C223/C237. N63 carries N-linked (GlcNAc...) asparagine glycosylation. E147 (proton donor) is an active-site residue. 2 N-linked (GlcNAc...) asparagine glycosylation sites follow: N165 and N179. A glycan (N-linked (GlcNAc...) asparagine) is linked at N368. Intrachain disulfides connect C376-C387, C381-C435, and C437-C464. The N-linked (GlcNAc...) asparagine glycan is linked to N408.

The protein belongs to the glycosyl hydrolase 56 family.

The protein localises to the cell membrane. The enzyme catalyses Random hydrolysis of (1-&gt;4)-linkages between N-acetyl-beta-D-glucosamine and D-glucuronate residues in hyaluronate.. Its function is as follows. Involved in sperm-egg adhesion. Upon fertilization sperm must first penetrate a layer of cumulus cells that surrounds the egg before reaching the zona pellucida. The cumulus cells are embedded in a matrix containing hyaluronic acid which is formed prior to ovulation. This protein aids in penetrating the layer of cumulus cells by digesting hyaluronic acid. This chain is Hyaluronidase PH-20 (Spam1), found in Rattus norvegicus (Rat).